The sequence spans 608 residues: RAS guanyl-releasing protein 2 (608 aa).

Residues 4–126 (TLDLDKGCTV…SLIDIESVPT (123 aa)) enclose the N-terminal Ras-GEF domain. Ser-116, Ser-117, and Ser-147 each carry phosphoserine. The 234-residue stretch at 154–387 (EPMELAEHLT…YQLSLQREPR (234 aa)) folds into the Ras-GEF domain. The disordered stretch occupies residues 382–405 (LQREPRSKSSPTSPTSCTPPPRPP). 2 consecutive EF-hand domains span residues 426–461 (HIEK…FPYL) and 463–490 (AFGD…SSSV). Residues Asp-439, Asp-441, Asp-443, His-445, Glu-450, Asp-468, Asn-470, Asp-472, Cys-474, and Glu-479 each coordinate Ca(2+). A Phorbol-ester/DAG-type zinc finger spans residues 498 to 548 (VHNLQESNSLRPVACRHCKALILGIYKQGLKCRACGVNCHKQCKDRLSVEC). Phosphoserine occurs at positions 554 and 575. Positions 555-596 (VSLEGSAPSPSPTHTHHRAFSFSLPRPGRRSSRPPEIREEEV) are disordered.

Belongs to the RASGRP family. As to quaternary structure, forms a signaling complex with RAP1 and BRAF. Interacts with F-actin. Interacts with RAP1. Expressed in striatal neurons (at protein level). Expressed in the hematopoietic system. Detected in olfactory structures and deep cortical layers of brain.

Its subcellular location is the cytoplasm. The protein localises to the cytosol. It localises to the cell membrane. It is found in the synapse. The protein resides in the synaptosome. Its subcellular location is the cell projection. The protein localises to the ruffle membrane. Its function is as follows. Functions as a calcium- and DAG-regulated nucleotide exchange factor specifically activating Rap through the exchange of bound GDP for GTP. May also activate other GTPases such as RRAS, RRAS2, NRAS, KRAS but not HRAS. Functions in aggregation of platelets and adhesion of T-lymphocytes and neutrophils probably through inside-out integrin activation. May function in the muscarinic acetylcholine receptor M1/CHRM1 signaling pathway. The chain is RAS guanyl-releasing protein 2 (Rasgrp2) from Rattus norvegicus (Rat).